Here is a 160-residue protein sequence, read N- to C-terminus: Nucleotide-binding protein CJA_2652 (160 aa).

It belongs to the YajQ family.

Nucleotide-binding protein. This chain is Nucleotide-binding protein CJA_2652, found in Cellvibrio japonicus (strain Ueda107) (Pseudomonas fluorescens subsp. cellulosa).